The sequence spans 307 residues: Aspartate carbamoyltransferase catalytic subunit (307 aa).

The carbamoyl phosphate site is built by Arg56 and Thr57. Lys84 provides a ligand contact to L-aspartate. Arg106, His136, and Gln139 together coordinate carbamoyl phosphate. Positions 169 and 221 each coordinate L-aspartate. The carbamoyl phosphate site is built by Ala262 and Pro263.

This sequence belongs to the aspartate/ornithine carbamoyltransferase superfamily. ATCase family. As to quaternary structure, heterododecamer (2C3:3R2) of six catalytic PyrB chains organized as two trimers (C3), and six regulatory PyrI chains organized as three dimers (R2).

It catalyses the reaction carbamoyl phosphate + L-aspartate = N-carbamoyl-L-aspartate + phosphate + H(+). It functions in the pathway pyrimidine metabolism; UMP biosynthesis via de novo pathway; (S)-dihydroorotate from bicarbonate: step 2/3. In terms of biological role, catalyzes the condensation of carbamoyl phosphate and aspartate to form carbamoyl aspartate and inorganic phosphate, the committed step in the de novo pyrimidine nucleotide biosynthesis pathway. The chain is Aspartate carbamoyltransferase catalytic subunit from Streptococcus pneumoniae serotype 2 (strain D39 / NCTC 7466).